The following is a 158-amino-acid chain: Transcription elongation factor GreA (158 aa).

Residues 53-73 (EQQSFVEGRIQEIEGKLSNAQ) adopt a coiled-coil conformation.

Belongs to the GreA/GreB family.

Necessary for efficient RNA polymerase transcription elongation past template-encoded arresting sites. The arresting sites in DNA have the property of trapping a certain fraction of elongating RNA polymerases that pass through, resulting in locked ternary complexes. Cleavage of the nascent transcript by cleavage factors such as GreA or GreB allows the resumption of elongation from the new 3'terminus. GreA releases sequences of 2 to 3 nucleotides. In Alkalilimnicola ehrlichii (strain ATCC BAA-1101 / DSM 17681 / MLHE-1), this protein is Transcription elongation factor GreA.